The sequence spans 66 residues: Alpha-conotoxin GIB (66 aa).

The first 21 residues, 1–21, serve as a signal peptide directing secretion; that stretch reads MGMRMMFTVFLLVVLATTVVS. Residues 22 to 49 constitute a propeptide that is removed on maturation; sequence FPSERASDGRDDTAKDEGSDMEKLVEKK. 2 disulfides stabilise this stretch: Cys-51–Cys-56 and Cys-52–Cys-62. The residue at position 64 (Gly-64) is a Glycine amide.

Belongs to the conotoxin A superfamily. In terms of tissue distribution, expressed by the venom duct.

The protein resides in the secreted. In terms of biological role, alpha-conotoxins act on postsynaptic membranes, they bind to the nicotinic acetylcholine receptors (nAChR) and thus inhibit them. Both the globular (with C1-C3; C2-C4 disulfide pattern) and ribbon (C1-C4; C2-C3) isomers reversibly inhibit human muscle-type alpha-1-beta-1-delta-epsilon/CHRNA1-CHRNB1-CHRND-CHRNE nAChRs (IC(50)=116 nM and IC(50)=643 nM, respectively). Both isomers also inhibit alpha-7/CHRNA7 and alpha-9-alpha-10/CHRNA9-CHRNA10 (IC(50)=1113 nM by globular isomer) nAChRs. The protein is Alpha-conotoxin GIB of Conus geographus (Geography cone).